We begin with the raw amino-acid sequence, 49 residues long: Light-harvesting protein B-875 beta chain (49 aa).

Over 2 to 27 the chain is Cytoplasmic; the sequence is ADKSDLGYTGLTDEQAQELHSVYMSG. Residues histidine 21 and histidine 39 each coordinate a bacteriochlorophyll. The chain crosses the membrane as a helical; Signal-anchor for type II membrane protein span at residues 28–45; that stretch reads LWLFSAVAIVAHLAVYIW. Topologically, residues 46–49 are periplasmic; it reads RPWF.

It belongs to the antenna complex beta subunit family. The core complex is formed by different alpha and beta chains, binding bacteriochlorophyll molecules, and arranged most probably in tetrameric structures disposed around the reaction center. The non-pigmented gamma chains may constitute additional components.

The protein localises to the cell inner membrane. Antenna complexes are light-harvesting systems, which transfer the excitation energy to the reaction centers. This chain is Light-harvesting protein B-875 beta chain (pufB), found in Cereibacter sphaeroides (strain ATCC 17023 / DSM 158 / JCM 6121 / CCUG 31486 / LMG 2827 / NBRC 12203 / NCIMB 8253 / ATH 2.4.1.) (Rhodobacter sphaeroides).